The following is a 279-amino-acid chain: Large ribosomal subunit protein uL2 (279 aa).

The disordered stretch occupies residues 218-279; sequence RPQTRGSAMN…ITRRKSNPKR (62 aa). A compositionally biased stretch (basic residues) spans 255–279; the sequence is KGSKTRRKKASDKLIITRRKSNPKR.

The protein belongs to the universal ribosomal protein uL2 family. Part of the 50S ribosomal subunit. Forms a bridge to the 30S subunit in the 70S ribosome.

In terms of biological role, one of the primary rRNA binding proteins. Required for association of the 30S and 50S subunits to form the 70S ribosome, for tRNA binding and peptide bond formation. It has been suggested to have peptidyltransferase activity; this is somewhat controversial. Makes several contacts with the 16S rRNA in the 70S ribosome. This chain is Large ribosomal subunit protein uL2, found in Sulfurimonas denitrificans (strain ATCC 33889 / DSM 1251) (Thiomicrospira denitrificans (strain ATCC 33889 / DSM 1251)).